Here is a 2703-residue protein sequence, read N- to C-terminus: Serine/arginine repetitive matrix protein 2 (2703 aa).

At Met1 the chain carries N-acetylmethionine. The stretch at 60–92 forms a coiled coil; that stretch reads HERKRRVELRCLELEEMMEEQGYEEQQIQEKVA. N6-acetyllysine is present on Lys101. Glycyl lysine isopeptide (Lys-Gly) (interchain with G-Cter in SUMO2) cross-links involve residues Lys108 and Lys130. The segment at 141-1007 is disordered; sequence ISDSYVDGSS…SGSFHLCPGV (867 aa). Tyr145 carries the phosphotyrosine modification. N6-acetyllysine is present on Lys169. Basic residues-rich tracts occupy residues 186–197 and 207–249; these read KQKKKKKKKDRG and RERK…KRSR. Residues 197-259 are sufficient for RNA-binding; sequence GRRSESSSPR…STTPAPKSRR (63 aa). Residues Ser220 and Ser222 each carry the phosphoserine modification. The span at 263-284 shows a compositional bias: low complexity; it reads STSADSASSSDTSRSRSRSAAA. Phosphoserine is present on residues Ser295, Ser300, Ser310, Ser322, and Ser323. The span at 319–334 shows a compositional bias: low complexity; sequence QQPSSPAPSTKQSSSP. Residues 335 to 345 show a composition bias toward basic and acidic residues; it reads YEDKDKKEKSA. Residues Ser349, Ser351, Ser355, and Ser356 each carry the phosphoserine modification. Thr357 and Thr365 each carry phosphothreonine. Residues Ser375, Ser385, Ser393, Ser396, Ser402, Ser406, Ser422, Ser433, Ser434, Ser435, Ser438, Ser452, Ser482, Ser484, Ser503, Ser505, Ser507, Ser531, Ser533, and Ser540 each carry the phosphoserine modification. A compositionally biased stretch (polar residues) spans 383–396; sequence PSSQEPVNPSSEAS. The segment covering 425–437 has biased composition (polar residues); sequence PTKGSRHASSSPE. Residues 459–533 show a composition bias toward basic residues; the sequence is NRSHGRAKRD…SPQRRGRSRS (75 aa). A compositionally biased stretch (low complexity) spans 534–543; the sequence is PQRPGWSRSR. Composition is skewed to basic residues over residues 544 to 561, 568 to 721, and 730 to 740; these read NTQR…RSHS, GRSR…RRGR, and NKSRTSQRRSR. 3 positions are modified to phosphoserine: Ser700, Ser702, and Ser704. A phosphoserine mark is found at Ser773, Ser775, and Ser778. The segment covering 785-817 has biased composition (low complexity); the sequence is SQTPTRRSRSGSSPPKQKSKTPPRQSRSNSPQP. A phosphoserine mark is found at Ser821 and Ser829. Composition is skewed to polar residues over residues 829–851 and 859–874; these read SVTN…SESS and RTPS…PRVK. A phosphothreonine mark is found at Thr831 and Thr841. 3 positions are modified to phosphoserine: Ser846, Ser850, and Ser851. 2 stretches are compositionally biased toward low complexity: residues 875-891 and 898-919; these read SSTP…SPQP and SPRG…TSRT. 11 positions are modified to phosphoserine: Ser882, Ser909, Ser924, Ser926, Ser928, Ser940, Ser942, Ser944, Ser945, Ser946, and Ser949. Thr955 is subject to Phosphothreonine. Residues 960–1000 are compositionally biased toward polar residues; sequence SGSTSPYLKSMLQTPPDQNLSGSKSPCPQKSRDSPTGSSGS. Phosphoserine occurs at positions 962 and 964. Position 966 is a phosphotyrosine (Tyr966). Phosphothreonine is present on Thr973. Phosphoserine occurs at positions 980, 984, and 993. Position 995 is a phosphothreonine (Thr995). Phosphoserine is present on residues Ser997, Ser1000, Ser1011, Ser1037, and Ser1038. Residues 1024–1057 show a composition bias toward polar residues; the sequence is VQQKGHTQTWPDTSSPEVMQTQVESPLLQSKSQT. The tract at residues 1024 to 1112 is disordered; sequence VQQKGHTQTW…TKPDSSIYPL (89 aa). At Thr1044 the chain carries Phosphothreonine. Phosphoserine is present on residues Ser1048, Ser1064, Ser1066, Ser1067, and Ser1068. Residues 1058–1068 show a composition bias toward low complexity; the sequence is SPKGSLSRSSS. Thr1071 is subject to Phosphothreonine. Phosphoserine occurs at positions 1077, 1087, 1094, 1097, 1117, 1151, 1159, 1175, 1188, 1216, 1225, 1229, 1230, 1269, 1276, 1278, 1284, 1287, 1294, 1305, 1325, 1338, 1339, 1340, 1343, 1359, and 1360. Residues 1079–1092 are compositionally biased toward basic and acidic residues; the sequence is VKQDKSEISTDPKL. The tract at residues 1136–2092 is disordered; sequence IQEDVASSCI…RSPGMLEPLG (957 aa). Residues 1146-1158 show a composition bias toward basic and acidic residues; that stretch reads PRDKFSPTQDRPE. The span at 1270 to 1284 shows a compositional bias: basic and acidic residues; the sequence is PEHKELSHSPPRENS. The span at 1285–1304 shows a compositional bias: polar residues; that stretch reads FESSLEFKNSGPVSEVNTGF. Phosphothreonine is present on Thr1370. Positions 1371–1387 are enriched in basic and acidic residues; that stretch reads PSRERSSSASPELKDGL. Residues Ser1372, Ser1378, and Ser1380 each carry the phosphoserine modification. A Phosphothreonine modification is found at Thr1390. Over residues 1397-1408 the composition is skewed to low complexity; the sequence is SGSSPGLRDGSG. Phosphoserine is present on residues Ser1400 and Ser1407. Thr1409 carries the post-translational modification Phosphothreonine. Positions 1409-1431 are enriched in polar residues; it reads TPSRHSLSGSSPGMKDTPQTPSR. Phosphoserine occurs at positions 1414, 1416, 1418, and 1419. At Thr1428 the chain carries Phosphothreonine. Residues Ser1438 and Ser1439 each carry the phosphoserine modification. Thr1448 is modified (phosphothreonine). A phosphoserine mark is found at Ser1453, Ser1455, Ser1457, Ser1458, and Ser1465. Residues 1454–1468 are compositionally biased toward polar residues; the sequence is HSPSSPERNNKSVTP. Thr1467 carries the post-translational modification Phosphothreonine. A phosphoserine mark is found at Ser1473, Ser1475, Ser1477, and Ser1478. The segment covering 1475-1489 has biased composition (polar residues); that stretch reads SESSVEQKNLARTSP. At Thr1487 the chain carries Phosphothreonine. A compositionally biased stretch (low complexity) spans 1490–1499; sequence GQRSRSGSSQ. 5 positions are modified to phosphoserine: Ser1493, Ser1495, Ser1497, Ser1498, and Ser1508. The span at 1511-1523 shows a compositional bias: basic and acidic residues; it reads ERSESDSSPDSKP. Residues 1524-1533 show a composition bias toward basic residues; the sequence is KTRTPLRQRS. Residues Ser1533, Ser1535, Ser1537, Ser1538, Ser1554, Ser1556, Ser1557, Ser1572, Ser1576, Ser1577, Ser1604, Ser1614, Ser1647, Ser1649, and Ser1650 each carry the phosphoserine modification. Over residues 1604-1613 the composition is skewed to low complexity; that stretch reads SPEGSSSSES. Positions 1637-1647 are enriched in basic residues; the sequence is KSHTPPRRRSS. A Phosphothreonine modification is found at Thr1654. Ser1683, Ser1685, Ser1687, Ser1688, Ser1718, and Ser1720 each carry phosphoserine. Composition is skewed to basic residues over residues 1725 to 1745 and 1754 to 1772; these read GLQR…RRRD and SRRR…RRRG. Phosphoserine is present on residues Ser1774, Ser1778, Ser1810, Ser1813, Ser1832, and Ser1834. A compositionally biased stretch (low complexity) spans 1776–1789; that stretch reads YHSRSPTRQESSRT. The span at 1790–1810 shows a compositional bias: basic residues; that stretch reads SSRRRRGRSRTPLTSRKRSRS. Over residues 1818–2020 the composition is skewed to basic residues; the sequence is KRSRSRASPA…PRAARGKRSL (203 aa). Residue Thr1836 is modified to Phosphothreonine. 2 positions are modified to phosphoserine: Ser1840 and Ser1846. Thr1848 is modified (phosphothreonine). Ser1849, Ser1869, Ser1872, Ser1876, and Ser1878 each carry phosphoserine. A phosphothreonine mark is found at Thr1880 and Thr1884. 2 positions are modified to phosphoserine: Ser1898 and Ser1900. A phosphothreonine mark is found at Thr1902 and Thr1906. Phosphoserine is present on residues Ser1910 and Ser1912. Thr1914 and Thr1918 each carry phosphothreonine. Residues Ser1922, Ser1924, and Ser1927 each carry the phosphoserine modification. Thr1930 carries the post-translational modification Phosphothreonine. Phosphoserine occurs at positions 1936, 1939, 1948, 1951, 1960, 1963, 1970, and 1972. At Thr1974 the chain carries Phosphothreonine. Phosphoserine occurs at positions 1982 and 1984. A Phosphothreonine modification is found at Thr1986. A phosphoserine mark is found at Ser1994, Ser1996, Ser1998, and Ser2019. Thr2021 is subject to Phosphothreonine. The span at 2022–2047 shows a compositional bias: low complexity; it reads RSPPAIRRRSASGSSSDRSRSATPPA. Residues Ser2023 and Ser2042 each carry the phosphoserine modification. Phosphothreonine is present on Thr2044. 2 positions are modified to phosphoserine: Ser2052 and Ser2054. Thr2056 carries the phosphothreonine modification. The span at 2062–2076 shows a compositional bias: low complexity; the sequence is SSSRMSCFSRPSMSP. Phosphoserine is present on residues Ser2070, Ser2073, Ser2075, and Ser2084. Thr2096 carries the phosphothreonine modification. An omega-N-methylarginine mark is found at Arg2146, Arg2159, Arg2183, and Arg2198. Ser2224 bears the Phosphoserine mark. An omega-N-methylarginine mark is found at Arg2226 and Arg2240. Thr2241 and Thr2254 each carry phosphothreonine. Phosphoserine is present on Ser2262. Residues 2263-2703 are disordered; the sequence is LTGSGTPPTA…SNRHRSSRSP (441 aa). Thr2268 and Thr2281 each carry phosphothreonine. Positions 2269 to 2283 are enriched in polar residues; sequence PPTAANYPSSSRTPQ. Omega-N-methylarginine is present on Arg2295. Phosphoserine occurs at positions 2296, 2321, and 2329. Thr2334 bears the Phosphothreonine mark. Ser2335 bears the Phosphoserine mark. Position 2337 is an asymmetric dimethylarginine; alternate (Arg2337). Arg2337 is subject to Omega-N-methylarginine; alternate. Residues Ser2347, Ser2351, and Ser2360 each carry the phosphoserine modification. Phosphothreonine is present on Thr2362. Residues Ser2365, Ser2368, Ser2381, Ser2384, Ser2404, and Ser2408 each carry the phosphoserine modification. Composition is skewed to polar residues over residues 2410 to 2443 and 2467 to 2476; these read FSDQ…SASD and TGAQQPSTLA. Residues 2487 to 2521 show a composition bias toward low complexity; the sequence is SSSSSSSSSSSSSSSSSSSSSSSSGSSSSDSEGSS. A Phosphoserine modification is found at Ser2535. Phosphothreonine is present on Thr2537. Residue Lys2541 forms a Glycyl lysine isopeptide (Lys-Gly) (interchain with G-Cter in SUMO2) linkage. Thr2553 is subject to Phosphothreonine. Residues 2562–2602 show a composition bias toward low complexity; it reads SSSSSSSSSSSSSSSSSSSSSSSSSSSSSSSSSSSSSSSSS. Residues 2605-2622 show a composition bias toward pro residues; that stretch reads PAKPGPQALPKPASPKKP. Phosphoserine is present on residues Ser2618, Ser2629, Ser2631, Ser2638, Ser2642, Ser2644, Ser2646, Ser2648, Ser2656, and Ser2660. Basic and acidic residues predominate over residues 2623 to 2643; that stretch reads PPGERRSRSPRKPIDSLRDSR. Phosphothreonine is present on Thr2689. The residue at position 2691 (Ser2691) is a Phosphoserine. Residues 2694–2703 are compositionally biased toward basic residues; it reads SNRHRSSRSP.

Belongs to the CWC21 family. As to quaternary structure, component of pre-catalytic, catalytic and post-catalytic spliceosome complexes. Found in a pre-mRNA splicing complex with SFRS4, SFRS5, SNRP70, SNRPA1, SRRM1 and SRRM2. Component of the minor spliceosome, which splices U12-type introns. Interacts with DHX8. Interacts with CACTIN.

The protein localises to the nucleus. It is found in the nucleus speckle. In terms of biological role, required for pre-mRNA splicing as component of the spliceosome. As a component of the minor spliceosome, involved in the splicing of U12-type introns in pre-mRNAs. The sequence is that of Serine/arginine repetitive matrix protein 2 (Srrm2) from Mus musculus (Mouse).